A 63-amino-acid chain; its full sequence is Large ribosomal subunit protein eL24 (63 aa).

Residues C7, C10, C33, and C37 each coordinate Zn(2+). The segment at 7-37 (CSFCGGSIEPGTGLMYVLRNGQILWFCSSKC) adopts a C4-type zinc-finger fold.

It belongs to the eukaryotic ribosomal protein eL24 family. Part of the 50S ribosomal subunit. Forms a cluster with proteins L3 and L14. Zn(2+) is required as a cofactor.

Its function is as follows. Binds to the 23S rRNA. The protein is Large ribosomal subunit protein eL24 of Aeropyrum pernix (strain ATCC 700893 / DSM 11879 / JCM 9820 / NBRC 100138 / K1).